The following is a 255-amino-acid chain: Leucyl/phenylalanyl-tRNA--protein transferase (255 aa).

It belongs to the L/F-transferase family.

Its subcellular location is the cytoplasm. The catalysed reaction is N-terminal L-lysyl-[protein] + L-leucyl-tRNA(Leu) = N-terminal L-leucyl-L-lysyl-[protein] + tRNA(Leu) + H(+). It carries out the reaction N-terminal L-arginyl-[protein] + L-leucyl-tRNA(Leu) = N-terminal L-leucyl-L-arginyl-[protein] + tRNA(Leu) + H(+). The enzyme catalyses L-phenylalanyl-tRNA(Phe) + an N-terminal L-alpha-aminoacyl-[protein] = an N-terminal L-phenylalanyl-L-alpha-aminoacyl-[protein] + tRNA(Phe). Functionally, functions in the N-end rule pathway of protein degradation where it conjugates Leu, Phe and, less efficiently, Met from aminoacyl-tRNAs to the N-termini of proteins containing an N-terminal arginine or lysine. The polypeptide is Leucyl/phenylalanyl-tRNA--protein transferase (Burkholderia pseudomallei (strain 1106a)).